Here is a 493-residue protein sequence, read N- to C-terminus: Probable cytosol aminopeptidase (493 aa).

K256 and D261 together coordinate Mn(2+). K268 is a catalytic residue. Mn(2+)-binding residues include D279, D338, and E340. R342 is an active-site residue.

The protein belongs to the peptidase M17 family. It depends on Mn(2+) as a cofactor.

The protein resides in the cytoplasm. It carries out the reaction Release of an N-terminal amino acid, Xaa-|-Yaa-, in which Xaa is preferably Leu, but may be other amino acids including Pro although not Arg or Lys, and Yaa may be Pro. Amino acid amides and methyl esters are also readily hydrolyzed, but rates on arylamides are exceedingly low.. The catalysed reaction is Release of an N-terminal amino acid, preferentially leucine, but not glutamic or aspartic acids.. In terms of biological role, presumably involved in the processing and regular turnover of intracellular proteins. Catalyzes the removal of unsubstituted N-terminal amino acids from various peptides. The sequence is that of Probable cytosol aminopeptidase from Phytoplasma australiense.